The sequence spans 407 residues: MKIYLVGGAVRDSLLNIDVKDKDWVVVGSTPQEMGSLGYQTVGQDFPVFLHPKTKEEYALARTERKSGQGYKGFTCYAEPDVTLEEDLLRRDLTINAIAQADNGELIDPYNGQQDIIDRTLRHVSDAFTEDPLRVLRVARFAARFHHLGFTIAHETMNLMKVLVDSGELSHLTAERVWQEWQKSLSSQHPEIFLSTLKECGALAIVLPELNALFGVPQPEKWHPEIDSGIHTLMVAQQAALLSQDLPTRFAAQVHDLGKGVTPESEWPSHKLHCHTGIKLIKRLCDRVRVPNDYRDLALLVCEHHSNIHRAAELRAQTFIKIFDKMDVWRKPERLAPILLCCQADHAGRLGLETQPYPQKQRFEAAFDAAKMVEVKEVVAAGFKGQEIRDELNKRRIEAVKDKLDIK.

ATP is bound by residues G8 and R11. G8 and R11 together coordinate CTP. The Mg(2+) site is built by D21 and D23. ATP contacts are provided by R91, R137, and R140. The CTP site is built by R91, R137, and R140. One can recognise an HD domain in the interval 228–329 (SGIHTLMVAQ…IKIFDKMDVW (102 aa)).

The protein belongs to the tRNA nucleotidyltransferase/poly(A) polymerase family. Bacterial CCA-adding enzyme type 1 subfamily. As to quaternary structure, monomer. Can also form homodimers and oligomers. It depends on Mg(2+) as a cofactor. Ni(2+) serves as cofactor.

It carries out the reaction a tRNA precursor + 2 CTP + ATP = a tRNA with a 3' CCA end + 3 diphosphate. The enzyme catalyses a tRNA with a 3' CCA end + 2 CTP + ATP = a tRNA with a 3' CCACCA end + 3 diphosphate. Functionally, catalyzes the addition and repair of the essential 3'-terminal CCA sequence in tRNAs without using a nucleic acid template. Adds these three nucleotides in the order of C, C, and A to the tRNA nucleotide-73, using CTP and ATP as substrates and producing inorganic pyrophosphate. tRNA 3'-terminal CCA addition is required both for tRNA processing and repair. Also involved in tRNA surveillance by mediating tandem CCA addition to generate a CCACCA at the 3' terminus of unstable tRNAs. While stable tRNAs receive only 3'-terminal CCA, unstable tRNAs are marked with CCACCA and rapidly degraded. In Aliivibrio fischeri (strain MJ11) (Vibrio fischeri), this protein is Multifunctional CCA protein.